We begin with the raw amino-acid sequence, 304 residues long: Glutaminase (304 aa).

Substrate is bound by residues Ser-61, Asn-113, Glu-158, Asn-165, Tyr-189, Tyr-240, and Val-258.

Belongs to the glutaminase family. In terms of assembly, homotetramer.

It carries out the reaction L-glutamine + H2O = L-glutamate + NH4(+). This chain is Glutaminase, found in Fusobacterium nucleatum subsp. nucleatum (strain ATCC 25586 / DSM 15643 / BCRC 10681 / CIP 101130 / JCM 8532 / KCTC 2640 / LMG 13131 / VPI 4355).